A 459-amino-acid polypeptide reads, in one-letter code: Cytosolic carboxypeptidase 6 (459 aa).

The Peptidase M14 domain maps to 142-418; sequence IPYTYGQMQI…AFCRALLNFY (277 aa). Zn(2+) contacts are provided by histidine 204, glutamate 207, and histidine 302. Glutamate 376 (proton donor/acceptor) is an active-site residue.

This sequence belongs to the peptidase M14 family. It depends on Zn(2+) as a cofactor. Expressed in labial and amphid neurons.

The protein localises to the cytoplasm. The catalysed reaction is (L-glutamyl)(n+1)-gamma-L-glutamyl-L-glutamyl-[protein] + H2O = (L-glutamyl)(n)-gamma-L-glutamyl-L-glutamyl-[protein] + L-glutamate. Its function is as follows. Metallocarboxypeptidase that catalyzes the removing of polyglutamate side chains that are present on the gamma-carboxyl group of glutamate residues of tubulin in sensory cilia. Probably via the deglutamylation of tubulin, promotes microtubule stability required for axon regrowth after injury. Also regulates microtubule dynamics in uterine muscle cells. This Caenorhabditis elegans protein is Cytosolic carboxypeptidase 6.